The chain runs to 482 residues: Anthranilate synthase component 1 (482 aa).

L-tryptophan-binding positions include Ser-47 and 267-269; that span reads PYM. 302 to 303 contributes to the chorismate binding site; it reads GT. Position 329 (Glu-329) interacts with Mg(2+). Chorismate-binding positions include Tyr-417, Arg-437, 451-453, and Gly-453; that span reads GGG. Glu-466 is a Mg(2+) binding site.

Belongs to the anthranilate synthase component I family. In terms of assembly, heterotetramer consisting of two non-identical subunits: a beta subunit (TrpG) and a large alpha subunit (TrpE). It depends on Mg(2+) as a cofactor.

The enzyme catalyses chorismate + L-glutamine = anthranilate + pyruvate + L-glutamate + H(+). Its pathway is amino-acid biosynthesis; L-tryptophan biosynthesis; L-tryptophan from chorismate: step 1/5. Its activity is regulated as follows. Feedback inhibited by tryptophan. Functionally, part of a heterotetrameric complex that catalyzes the two-step biosynthesis of anthranilate, an intermediate in the biosynthesis of L-tryptophan. In the first step, the glutamine-binding beta subunit (TrpG) of anthranilate synthase (AS) provides the glutamine amidotransferase activity which generates ammonia as a substrate that, along with chorismate, is used in the second step, catalyzed by the large alpha subunit of AS (TrpE) to produce anthranilate. In the absence of TrpG, TrpE can synthesize anthranilate directly from chorismate and high concentrations of ammonia. The polypeptide is Anthranilate synthase component 1 (trpE) (Spirochaeta aurantia).